Here is a 357-residue protein sequence, read N- to C-terminus: UDP-N-acetylglucosamine--N-acetylmuramyl-(pentapeptide) pyrophosphoryl-undecaprenol N-acetylglucosamine transferase (357 aa).

UDP-N-acetyl-alpha-D-glucosamine-binding positions include Ser-13–Gly-15, Arg-166, Ser-196, and Gln-291.

The protein belongs to the glycosyltransferase 28 family. MurG subfamily.

It is found in the cell membrane. It carries out the reaction di-trans,octa-cis-undecaprenyl diphospho-N-acetyl-alpha-D-muramoyl-L-alanyl-D-glutamyl-meso-2,6-diaminopimeloyl-D-alanyl-D-alanine + UDP-N-acetyl-alpha-D-glucosamine = di-trans,octa-cis-undecaprenyl diphospho-[N-acetyl-alpha-D-glucosaminyl-(1-&gt;4)]-N-acetyl-alpha-D-muramoyl-L-alanyl-D-glutamyl-meso-2,6-diaminopimeloyl-D-alanyl-D-alanine + UDP + H(+). It participates in cell wall biogenesis; peptidoglycan biosynthesis. Cell wall formation. Catalyzes the transfer of a GlcNAc subunit on undecaprenyl-pyrophosphoryl-MurNAc-pentapeptide (lipid intermediate I) to form undecaprenyl-pyrophosphoryl-MurNAc-(pentapeptide)GlcNAc (lipid intermediate II). In Clostridium perfringens (strain SM101 / Type A), this protein is UDP-N-acetylglucosamine--N-acetylmuramyl-(pentapeptide) pyrophosphoryl-undecaprenol N-acetylglucosamine transferase.